Reading from the N-terminus, the 306-residue chain is uncharacterized protein (306 aa).

Positions 277–306 form a coiled coil; that stretch reads TEIIQNYKIANELKKEKQQNKKKNSIELEE.

This is an uncharacterized protein from Saccharolobus islandicus (Sulfolobus islandicus).